A 397-amino-acid chain; its full sequence is Subtilisin-like protease 3 (397 aa).

A signal peptide spans 1–19; the sequence is MGCIKVISVFLAAVAAVDA. Residues 20–116 constitute a propeptide that is removed on maturation; that stretch reads RAFFHNRGGN…VEHDRVVKLA (97 aa). One can recognise an Inhibitor I9 domain in the interval 35-116; the sequence is SYIVVMKDGV…VEHDRVVKLA (82 aa). In terms of domain architecture, Peptidase S8 spans 126 to 397; it reads TWGLGRVSHK…NKLLYNGSGR (272 aa). Catalysis depends on charge relay system residues D158 and H189. N250 carries N-linked (GlcNAc...) asparagine glycosylation. The Charge relay system role is filled by S344. N-linked (GlcNAc...) asparagine glycosylation is present at N393.

Belongs to the peptidase S8 family.

Its subcellular location is the secreted. Secreted subtilisin-like serine protease with keratinolytic activity that contributes to pathogenicity. The chain is Subtilisin-like protease 3 (SUB3) from Arthroderma otae (strain ATCC MYA-4605 / CBS 113480) (Microsporum canis).